We begin with the raw amino-acid sequence, 1009 residues long: MKVFPAVLFLITFWSLEWEPVLPDSIIHIGAIFDESAKKDDEVFRMAVADLNLNNEILETEKITVSVEFVDGNNPFQAVQEACELMNRGILALVSSIGCMSAGSLQSLADAMHIPHLFIQRAPAGTPRSSCPPTTRAQPDDYTLFVRPPVYLNDVIFQVVMEYTWQKFIIFYDTDYDIRGIENFLDQTSQQGMDVSLQKVESNINMMITGMFRTMRVEELHRYRDTLRRAVLFMSPATAKAFITEVVETNLVAFDCQWIIINEEISDMDVQELVMKSIGRLTLVRQTFPLPQNTSQRCVRNNHRINTSLCDPKDPKAQMLEITNRYIYDTVLLLANTFHRKLEDRKWHSMASLSCIRKGSKPWQGGKSMLETVKKGGVSGLTSLLEFNDNGSNPNIHFEILGTNYGEDRGRGVSRLATWDPIHGLNGTLTDRKLENNMRGVVLRVVTVLEEPFVMVSENVLGKPKKYQGFSIDVLDALANYLGFKYEIYVAPDHKYGSQQADGTWNGLIGELVFKRADVGLSALTITPERESVVDFTTRYMDYSVGVLLRKAERTVDMFACLAPFDLSLWACIAGTVLLVGTLVYLLNWLNPPRLPMGSVSSTTLYNSMWFVYGSFVQQGGEVPYTTLATRMMMGVWWLFALIVISSYTANLAAFLTISRIENSIQSLQDLAKQTDLPYGTVLDSAVYDQVRSKGMNPFERDPMYSQMWRMINRTGGAENNVEESKEGIRKVKYGRFAFVWDAAVLEYVAINDEDCSLYTVSNNVADRGYGMAMQHGSPYRDIFSQRILELQQNGDMDILKLKWWPRDSPCDLYSPVGTRKSGSALDIHSFAGVFFVLAAGVVLSCLIATVETWWTRRKGSRVPSKEDDKEIDLEHLHHRVNSLCTEDESPHKQFSTSSIDLTPLDMDSLPAARQALEQISDFRNTHITTTTFIPEQIQTLSRSLSAKAAAGFAFGAVQDHRTGGPFRQRAPNGGFFRSPVKTMSSIPYQPTPAPNFSYGNDPDRGTSI.

The N-terminal stretch at Met1 to Pro23 is a signal peptide. Topologically, residues Asp24–Asp566 are extracellular. Asn293, Asn306, Asn390, and Asn426 each carry an N-linked (GlcNAc...) asparagine glycan. Glu531, Val534, and Asp535 together coordinate Ca(2+). The chain crosses the membrane as a helical span at residues Leu567–Leu587. The Cytoplasmic segment spans residues Asn588–Gly635. The helical transmembrane segment at Val636–Leu656 threads the bilayer. The Extracellular portion of the chain corresponds to Thr657–Ser830. The N-linked (GlcNAc...) asparagine glycan is linked to Asn713. Residues Asp753, Asp755, and Ser757 each coordinate Ca(2+). The chain crosses the membrane as a helical span at residues Phe831–Val851. At Glu852–Ile1009 the chain is on the cytoplasmic side. Residues Tyr989–Ile1009 are disordered.

Belongs to the glutamate-gated ion channel (TC 1.A.10.1) family. GRID2 subfamily. As to quaternary structure, tetramer; dimer of dimers. In terms of tissue distribution, expressed in cerebellar Purkinje cells, in crest cells in the medial octavolateral nucleus and in type I neurons of the optic tectum.

The protein localises to the postsynaptic cell membrane. It catalyses the reaction Ca(2+)(in) = Ca(2+)(out). The catalysed reaction is Na(+)(in) = Na(+)(out). Its function is as follows. Member of the ionotropic glutamate receptor family, which plays a crucial role in synaptic organization and signal transduction in the central nervous system. Although it shares structural features with ionotropic glutamate receptors, does not bind glutamate as a primary ligand. Promotes synaptogenesis and mediates the D-Serine-dependent long term depression signals and AMPA receptor endocytosis of cerebellar parallel fiber-Purkinje cell (PF-PC) synapses through the NRX1B-CBLN1-GRID2 triad complex. In the presence of neurexins and cerebellins, forms cation-selective channels that are proposed to be gated by glycine and D-serine. However, recent research disputes this ligand-gated cation channel activity. Cation-selective ion channel activity can be triggered by GRM1 in Purkinje cells. The polypeptide is Glutamate receptor ionotropic, delta-2 (Danio rerio (Zebrafish)).